The chain runs to 210 residues: Phosphoribosyl-dephospho-CoA transferase (210 aa).

Residues Asp135 and Asp137 contribute to the active site.

Belongs to the MdcG family.

The enzyme catalyses apo-[malonate decarboxylase ACP] + 2'-(5''-triphospho-alpha-D-ribosyl)-3'-dephospho-CoA = holo-[malonate decarboxylase ACP] + diphosphate. Transfers 2'-(5-triphosphoribosyl)-3'-dephosphocoenzyme-A to the apo-[acyl-carrier-protein] of the malonate decarboxylase to yield holo-[acyl-carrier-protein]. This is Phosphoribosyl-dephospho-CoA transferase from Pseudomonas aeruginosa (strain ATCC 15692 / DSM 22644 / CIP 104116 / JCM 14847 / LMG 12228 / 1C / PRS 101 / PAO1).